The following is a 371-amino-acid chain: Carnitine monooxygenase oxygenase subunit (371 aa).

The Rieske domain maps to 44–152 (WICVAHSSEL…VEEYAGFLFI (109 aa)). Positions 86, 88, 106, and 109 each coordinate [2Fe-2S] cluster. Fe cation is bound by residues H208, H213, and D323.

The protein belongs to the bacterial ring-hydroxylating dioxygenase alpha subunit family. CntA subfamily. As to quaternary structure, composed of an oxygenase subunit (cntA) and a reductase subunit (cntB). [2Fe-2S] cluster is required as a cofactor. Requires Fe cation as cofactor.

It catalyses the reaction (R)-carnitine + NADH + O2 + H(+) = (3R)-3-hydroxy-4-oxobutanoate + trimethylamine + NAD(+) + H2O. It carries out the reaction (R)-carnitine + NADPH + O2 + H(+) = (3R)-3-hydroxy-4-oxobutanoate + trimethylamine + NADP(+) + H2O. The protein operates within amine and polyamine metabolism; carnitine metabolism. In terms of biological role, converts carnitine to trimethylamine and malic semialdehyde. The polypeptide is Carnitine monooxygenase oxygenase subunit (Acinetobacter baumannii (strain ATCC 19606 / DSM 30007 / JCM 6841 / CCUG 19606 / CIP 70.34 / NBRC 109757 / NCIMB 12457 / NCTC 12156 / 81)).